Reading from the N-terminus, the 217-residue chain is Thymidylate kinase (217 aa).

7–14 (GIDGAGKS) contributes to the ATP binding site.

It belongs to the thymidylate kinase family.

The catalysed reaction is dTMP + ATP = dTDP + ADP. Functionally, phosphorylation of dTMP to form dTDP in both de novo and salvage pathways of dTTP synthesis. The sequence is that of Thymidylate kinase from Pelodictyon phaeoclathratiforme (strain DSM 5477 / BU-1).